Consider the following 246-residue polypeptide: Acetoacetate decarboxylase (246 aa).

The active-site Schiff-base intermediate with acetoacetate is the K116.

It belongs to the ADC family.

The enzyme catalyses acetoacetate + H(+) = acetone + CO2. Catalyzes the conversion of acetoacetate to acetone and carbon dioxide. The sequence is that of Acetoacetate decarboxylase from Burkholderia cenocepacia (strain HI2424).